The primary structure comprises 283 residues: Pantothenate synthetase (283 aa).

Position 31–38 (31–38 (MGALHDGH)) interacts with ATP. His-38 (proton donor) is an active-site residue. Gln-62 serves as a coordination point for (R)-pantoate. Gln-62 contacts beta-alanine. An ATP-binding site is contributed by 148–151 (GKKD). A (R)-pantoate-binding site is contributed by Gln-154. ATP contacts are provided by residues Val-177 and 185–188 (KSSR).

This sequence belongs to the pantothenate synthetase family. Homodimer.

The protein localises to the cytoplasm. It carries out the reaction (R)-pantoate + beta-alanine + ATP = (R)-pantothenate + AMP + diphosphate + H(+). The protein operates within cofactor biosynthesis; (R)-pantothenate biosynthesis; (R)-pantothenate from (R)-pantoate and beta-alanine: step 1/1. Functionally, catalyzes the condensation of pantoate with beta-alanine in an ATP-dependent reaction via a pantoyl-adenylate intermediate. The protein is Pantothenate synthetase of Staphylococcus aureus (strain MRSA252).